The following is a 105-amino-acid chain: Protein yippee-like At4g27740 (105 aa).

A Yippee domain is found at 8-105 (PTYFCRNCEN…IEKLKLTKRY (98 aa)). Residues Cys-12, Cys-15, Cys-68, and Cys-71 each coordinate Zn(2+).

It belongs to the yippee family.

In Arabidopsis thaliana (Mouse-ear cress), this protein is Protein yippee-like At4g27740.